A 388-amino-acid chain; its full sequence is Na(+)/H(+) antiporter NhaA (388 aa).

The Cytoplasmic portion of the chain corresponds to 1-11 (MKHLHRFFSSD). A helical membrane pass occupies residues 12-31 (ASGGIILIIAAILAMIMANS). Residues 32 to 58 (GATSGWYHDFLETPVQLRVGSLEINKN) are Periplasmic-facing. The tract at residues 45 to 58 (PVQLRVGSLEINKN) is important for dimerization. The helical transmembrane segment at 59-80 (MLLWINDALMAVFFLLVGLEVK) threads the bilayer. The Cytoplasmic portion of the chain corresponds to 81–96 (RELMQGSLASLRQAAF). The helical transmembrane segment at 97–116 (PVIAAIGGMIVPALLYLAFN) threads the bilayer. Over 117–122 (YADPIT) the chain is Periplasmic. A helical transmembrane segment spans residues 123–130 (REGWAIPA). Residues 131 to 154 (ATDIAFALGVLALLGSRVPLALKI) lie on the Cytoplasmic side of the membrane. The helical transmembrane segment at 155-176 (FLMALAIIDDLGAIIIIALFYT) threads the bilayer. At 177–180 (NDLS) the chain is on the periplasmic side. Residues 181–200 (MASLGVAAVAIAVLAVLNLC) traverse the membrane as a helical segment. Residues 201–204 (GARR) lie on the Cytoplasmic side of the membrane. Residues 205–222 (TGVYILVGVVLWTAVLKS) traverse the membrane as a helical segment. Position 223 (glycine 223) is a topological domain, periplasmic. The chain crosses the membrane as a helical span at residues 224 to 236 (VHATLAGVIVGFF). Residues 237-253 (IPLKEKHGRSPAKRLEH) lie on the Cytoplasmic side of the membrane. The chain crosses the membrane as a helical span at residues 254-272 (VLHPWVAYLILPLFAFANA). The Periplasmic segment spans residues 273–286 (GVSLQGVTLDGLTS). Residues 287 to 310 (ILPLGIIAGLLIGKPLGISLFCWL) traverse the membrane as a helical segment. Over 311 to 339 (ALRLKLAHLPEGTTYQQIMVVGILCGIGF) the chain is Cytoplasmic. Residues 340–350 (TMSIFIASLAF) traverse the membrane as a helical segment. Over 351-357 (GSVDPEL) the chain is Periplasmic. Residues 358–380 (INWAKLGILVGSISSAVIGYSWL) traverse the membrane as a helical segment. Residues 381-388 (RVRLRPSV) are Cytoplasmic-facing.

The protein belongs to the NhaA Na(+)/H(+) (TC 2.A.33) antiporter family. As to quaternary structure, monomer. Homodimer. Under routine stress conditions, the monomeric form is fully functional. However, the dimeric form is much more efficient in conferring growth resistance under extreme stress conditions.

It is found in the cell inner membrane. The enzyme catalyses Na(+)(in) + 2 H(+)(out) = Na(+)(out) + 2 H(+)(in). It catalyses the reaction Li(+)(in) + 2 H(+)(out) = Li(+)(out) + 2 H(+)(in). With respect to regulation, activity is regulated by pH. Active at alkaline pH. Activity is strongly down-regulated below pH 6.5 and a dramatic increase in activity is observed upon increase of the pH from 6.5 to 8.5. Its function is as follows. Na(+)/H(+) antiporter that extrudes sodium in exchange for external protons. Plays an important role in the regulation of intracellular pH, cellular Na(+) content and cell volume. Catalyzes the exchange of 2 H(+) per Na(+). This stoichiometry applies at both neutral and alkaline pH values. In addition, can also transport lithium and is involved in lithium detoxification. Binding of the Li(+) and H(+) ligands to NhaA is coupled and antagonistic. This chain is Na(+)/H(+) antiporter NhaA, found in Escherichia coli (strain K12).